The sequence spans 495 residues: tRNA(Ile)-lysidine synthase (495 aa).

S26–S31 is an ATP binding site.

This sequence belongs to the tRNA(Ile)-lysidine synthase family.

The protein resides in the cytoplasm. It carries out the reaction cytidine(34) in tRNA(Ile2) + L-lysine + ATP = lysidine(34) in tRNA(Ile2) + AMP + diphosphate + H(+). Its function is as follows. Ligates lysine onto the cytidine present at position 34 of the AUA codon-specific tRNA(Ile) that contains the anticodon CAU, in an ATP-dependent manner. Cytidine is converted to lysidine, thus changing the amino acid specificity of the tRNA from methionine to isoleucine. In Bartonella tribocorum (strain CIP 105476 / IBS 506), this protein is tRNA(Ile)-lysidine synthase.